The sequence spans 202 residues: Holliday junction branch migration complex subunit RuvA (202 aa).

The domain I stretch occupies residues 1 to 64 (MFAYIRGRLE…EDVISLYGFL (64 aa)). The domain II stretch occupies residues 65–143 (TQEELNVFEL…KEQLTEYAQS (79 aa)). The tract at residues 144–152 (EEGGKVLDT) is flexible linker. Residues 152 to 202 (TDSSKMAEAVSALMVLGYSPAEANKAVSAVYREDMDIETIIKNALKGLARP) form a domain III region.

This sequence belongs to the RuvA family. Homotetramer. Forms an RuvA(8)-RuvB(12)-Holliday junction (HJ) complex. HJ DNA is sandwiched between 2 RuvA tetramers; dsDNA enters through RuvA and exits via RuvB. An RuvB hexamer assembles on each DNA strand where it exits the tetramer. Each RuvB hexamer is contacted by two RuvA subunits (via domain III) on 2 adjacent RuvB subunits; this complex drives branch migration. In the full resolvosome a probable DNA-RuvA(4)-RuvB(12)-RuvC(2) complex forms which resolves the HJ.

It localises to the cytoplasm. Functionally, the RuvA-RuvB-RuvC complex processes Holliday junction (HJ) DNA during genetic recombination and DNA repair, while the RuvA-RuvB complex plays an important role in the rescue of blocked DNA replication forks via replication fork reversal (RFR). RuvA specifically binds to HJ cruciform DNA, conferring on it an open structure. The RuvB hexamer acts as an ATP-dependent pump, pulling dsDNA into and through the RuvAB complex. HJ branch migration allows RuvC to scan DNA until it finds its consensus sequence, where it cleaves and resolves the cruciform DNA. In Acetivibrio thermocellus (strain ATCC 27405 / DSM 1237 / JCM 9322 / NBRC 103400 / NCIMB 10682 / NRRL B-4536 / VPI 7372) (Clostridium thermocellum), this protein is Holliday junction branch migration complex subunit RuvA.